A 338-amino-acid chain; its full sequence is Delta(9)-fatty-acid desaturase fat-7 (338 aa).

Transmembrane regions (helical) follow at residues 51 to 71, 76 to 96, 194 to 214, and 218 to 238; these read VALFAALHVAAAIGLYELVFH, TAVFSFALYVFSGFGITAGAH, YFPLVILFCFILPTIIPVYFW, and AFIAFYVAGTFRYCFTLHATW.

Belongs to the fatty acid desaturase type 1 family. As to expression, expressed in the intestine in adult worms and in all four larval stages.

The protein resides in the membrane. It carries out the reaction octadecanoyl-CoA + 2 Fe(II)-[cytochrome b5] + O2 + 2 H(+) = (9Z)-octadecenoyl-CoA + 2 Fe(III)-[cytochrome b5] + 2 H2O. The catalysed reaction is hexadecanoyl-CoA + 2 Fe(II)-[cytochrome b5] + O2 + 2 H(+) = (9Z)-hexadecenoyl-CoA + 2 Fe(III)-[cytochrome b5] + 2 H2O. The enzyme catalyses heptadecanoyl-CoA + 2 Fe(II)-[cytochrome b5] + O2 + 2 H(+) = (9Z)-heptadecenoyl-CoA + 2 Fe(III)-[cytochrome b5] + 2 H2O. It catalyses the reaction (11E)-octadecenoyl-CoA + 2 Fe(II)-[cytochrome b5] + O2 + 2 H(+) = (9Z,11E)-octadecadienoyl-CoA + 2 Fe(III)-[cytochrome b5] + 2 H2O. It functions in the pathway lipid metabolism; monounsaturated fatty acid biosynthesis. Its pathway is lipid metabolism; fatty acid metabolism. In terms of biological role, delta(9)-fatty acid desaturase that acts preferentially on stearoyl-CoA (octadecanoyl-CoA) producing the monounsaturated oleoyl-CoA ((9Z)-octadecenoyl-CoA), one of the most abundant monounsaturated fatty acid in Caenorhabditis elegans phospholipids and triacylglycerols. Also acts on palmitoyl-CoA (hexadecanoyl-CoA), heptadecanoyl-CoA and (11E)-octadecenoyl-CoA (trans-vaccenoyl-CoA), the monounsaturated fatty acids (MUFAs) produced are further used by several other desaturases and elongases as substrates to synthesize polyunsaturated fatty acids (PUFAs) endogenously (PUFAs are essential for membrane structure and many cellular and physiological processes). Unlike plants, Caenorhabditis elegans desaturases seem to use fatty acyl-CoAs as substrates. Partially inhibits expression of genes involved in beta-oxidation, such as ech-1 and acs-2, perhaps signaling via the actions of one of its fatty acid products. May form part of a negative feedback loop with the transcription factor nhr-49 to limit beta-oxidation, in which nhr-49 stimulates expression of fat-7 and acs-2, and in turn fat-7 indirectly inhibits acs-2 and other genes also involved in beta-oxidation. The polypeptide is Delta(9)-fatty-acid desaturase fat-7 (fat-7) (Caenorhabditis elegans).